Consider the following 393-residue polypeptide: Protein TsgA homolog (393 aa).

Transmembrane regions (helical) follow at residues 11–31, 51–71, 78–98, 101–121, 134–154, 162–182, 206–226, 245–265, 273–293, 297–317, 332–352, and 361–381; these read WISFLSYALTGALVIVTGMVM, FLNAGILISIFLNAWLMEIIP, FGFVLMVLAVAGLMLSHSLAL, AAMFVLGLVSGITMSIGTFLI, LLFTDSFFSMAGMIFPMVAAY, WYWVYACIGLVYVAIFILTFG, IGVLFLSIAALCYILGQLGFI, TLVSDFWMSYMFGMWAFSFIL, ILTVLAGLAAVLMYLFIKAQP, AWFILTLGFFSSAIYTSIITL, FVLTCGTIGTMLTFVVTGPIV, and LLTANGLYAVVFVMCFILGFV.

It belongs to the major facilitator superfamily. TsgA family.

The protein resides in the cell inner membrane. The protein is Protein TsgA homolog of Citrobacter koseri (strain ATCC BAA-895 / CDC 4225-83 / SGSC4696).